Reading from the N-terminus, the 496-residue chain is Lysine--tRNA ligase (496 aa).

2 residues coordinate Mg(2+): Glu409 and Glu416.

Belongs to the class-II aminoacyl-tRNA synthetase family. As to quaternary structure, homodimer. Mg(2+) serves as cofactor.

The protein localises to the cytoplasm. The catalysed reaction is tRNA(Lys) + L-lysine + ATP = L-lysyl-tRNA(Lys) + AMP + diphosphate. In Streptococcus agalactiae serotype III (strain NEM316), this protein is Lysine--tRNA ligase.